The sequence spans 225 residues: Uracil-DNA glycosylase (225 aa).

Asp-65 functions as the Proton acceptor in the catalytic mechanism.

Belongs to the uracil-DNA glycosylase (UDG) superfamily. UNG family.

The protein resides in the cytoplasm. The catalysed reaction is Hydrolyzes single-stranded DNA or mismatched double-stranded DNA and polynucleotides, releasing free uracil.. Its function is as follows. Excises uracil residues from the DNA which can arise as a result of misincorporation of dUMP residues by DNA polymerase or due to deamination of cytosine. In Bacillus mycoides (strain KBAB4) (Bacillus weihenstephanensis), this protein is Uracil-DNA glycosylase.